Consider the following 77-residue polypeptide: uncharacterized protein (77 aa).

Functionally, putative sugar-binding regulatory protein for the alpha-amylase gene. This is an uncharacterized protein from Streptomyces violaceus (Streptomyces venezuelae).